Reading from the N-terminus, the 1009-residue chain is MGQLCWLPLLAPLLLLRPPGVQSAGPIRAFVVPHSHMDVGWVYTVQESMRAYAANVYTSVVEELARGQQRRFIAVEQEFFRLWWDGVASDQQKYQVRQLLEEGRLEFVIGGQVMHDEAVTHLDDQILQLTEGHGFLYETFGIRPQFSWHVDPFGASATTPTLFALAGFNAHLGSRIDYDLKAAMQEARGLQFVWRGSPSLSERQEIFTHIMDQYSYCTPSHIPFSNRSGFYWNGVAVFPKPPQDGVYPNMSEPVTPANINLYAEALVANVKQRAAWFRTPHVLWPWGCDKQFFNASVQFANMDPLLDHINSHAAELGVSVQYATLGDYFRALHALNVTWRVRDHHDFLPYSTEPFQAWTGFYTSRSSLKGLARRASALLYAGESMFTRYLWPAPRGHLDPTWALQQLQQLRWAVSEVQHHDAITGTESPKVRDMYATHLASGMLGMRKLMASIVLDELQPQAPMAASSDAGPAGHFASVYNPLAWTVTTIVTLTVGFPGVRVTDEAGHPVPSQIQNSTETPSAYDLLILTTIPGLSYRHYNIRPTAGAQEGTQEPAATVASTLQFGRRLRRRTSHAGRYLVPVANDCYIVLLDQDTNLMHSIWERQSNRTVRVTQEFLEYHVNGDVKQGPISDNYLFTPGKAAVPAWEAVEMEIVAGQLVTEIRQYFYRNMTAQNYTYAIRSRLTHVPQGHDGELLCHRIEQEYQAGPLELNREAVLRTSTNLNSQQVIYSDNNGYQMQRRPYVSYVNNSIARNYYPMVQSAFMEDGKSRLVLLSERAHGISSQGNGQVEVMLHRRLWNNFDWDLGYNLTLNDTSVVHPVLWLLLGSWSLTTALRQRSALALQHRPVVLFGDLAGTAPKLPGPQQQEAVTLPPNLHLQILSIPGWRYSSNHTEHSQNLRKGHRGEAQADLRRVLLRLYHLYEVGEDPVLSQPVTVNLEAVLQALGSVVAVEERSLTGTWDLSMLHRWSWRTGPGRHRGDTTSPSRPPGGPIITVHPKEIRTFFIHFQQQ.

The N-terminal stretch at 1–23 (MGQLCWLPLLAPLLLLRPPGVQS) is a signal peptide. Zn(2+) contacts are provided by His-36, Asp-38, and Asp-151. Asp-151 serves as the catalytic Nucleophile. N-linked (GlcNAc...) asparagine glycans are attached at residues Asn-226, Asn-249, Asn-294, and Asn-336. A Zn(2+)-binding site is contributed by His-420. N-linked (GlcNAc...) asparagine glycans are attached at residues Asn-516, Asn-608, Asn-670, Asn-675, Asn-748, Asn-808, Asn-812, and Asn-890. A disordered region spans residues 972 to 991 (GPGRHRGDTTSPSRPPGGPI).

The protein belongs to the glycosyl hydrolase 38 family. The cofactor is Zn(2+).

The protein localises to the secreted. The enzyme catalyses Hydrolysis of terminal, non-reducing alpha-D-mannose residues in alpha-D-mannosides.. This is Epididymis-specific alpha-mannosidase (MAN2B2) from Homo sapiens (Human).